The sequence spans 204 residues: Secreted phosphoprotein 24 (204 aa).

The signal sequence occupies residues M1 to G23. Intrachain disulfides connect C86-C97 and C110-C128. Phosphoserine is present on S90. Phosphoserine is present on residues S138, S139, S166, and S175. Positions M179–E204 are disordered.

It belongs to the SPP2 family. In terms of processing, multiply phosphorylated at serine residues. Post-translationally, phosphorylation sites are present in the extracellular medium.

The protein localises to the secreted. In terms of biological role, could coordinate an aspect of bone turnover. The sequence is that of Secreted phosphoprotein 24 (SPP2) from Sus scrofa (Pig).